The chain runs to 258 residues: tRNA pseudouridine synthase A (258 aa).

The Nucleophile role is filled by Asp52. Tyr110 is a binding site for substrate.

It belongs to the tRNA pseudouridine synthase TruA family. In terms of assembly, homodimer.

It carries out the reaction uridine(38/39/40) in tRNA = pseudouridine(38/39/40) in tRNA. Functionally, formation of pseudouridine at positions 38, 39 and 40 in the anticodon stem and loop of transfer RNAs. The chain is tRNA pseudouridine synthase A from Francisella tularensis subsp. mediasiatica (strain FSC147).